A 209-amino-acid polypeptide reads, in one-letter code: Large ribosomal subunit protein bL25 (209 aa).

It belongs to the bacterial ribosomal protein bL25 family. CTC subfamily. In terms of assembly, part of the 50S ribosomal subunit; part of the 5S rRNA/L5/L18/L25 subcomplex. Contacts the 5S rRNA. Binds to the 5S rRNA independently of L5 and L18.

Functionally, this is one of the proteins that binds to the 5S RNA in the ribosome where it forms part of the central protuberance. This chain is Large ribosomal subunit protein bL25, found in Chlorobium phaeobacteroides (strain BS1).